The chain runs to 395 residues: Phosphoglycerate kinase (395 aa).

Residues 21–23 (DLN), Arg36, 59–62 (HLGR), Arg114, and Arg147 contribute to the substrate site. ATP contacts are provided by residues Lys198, Glu320, and 346 to 349 (GGDT).

Belongs to the phosphoglycerate kinase family. In terms of assembly, monomer.

It is found in the cytoplasm. The enzyme catalyses (2R)-3-phosphoglycerate + ATP = (2R)-3-phospho-glyceroyl phosphate + ADP. The protein operates within carbohydrate degradation; glycolysis; pyruvate from D-glyceraldehyde 3-phosphate: step 2/5. In Nitrosospira multiformis (strain ATCC 25196 / NCIMB 11849 / C 71), this protein is Phosphoglycerate kinase.